The primary structure comprises 317 residues: uncharacterized protein (317 aa).

7 helical membrane-spanning segments follow: residues W18–I38, I58–F78, F92–V112, L130–V150, Q165–L185, L202–V222, and L253–N273.

This sequence belongs to the CbiQ family.

It is found in the cell membrane. This is an uncharacterized protein from Mycoplasma pneumoniae (strain ATCC 29342 / M129 / Subtype 1) (Mycoplasmoides pneumoniae).